The chain runs to 176 residues: Sec-independent protein translocase protein TatB (176 aa).

A helical membrane pass occupies residues 1-21 (MLDLGLSKMALIGVVALVVLG). The interval 155–176 (QSGAARVARHQPASLRRPTRFL) is disordered.

This sequence belongs to the TatB family. The Tat system comprises two distinct complexes: a TatABC complex, containing multiple copies of TatA, TatB and TatC subunits, and a separate TatA complex, containing only TatA subunits. Substrates initially bind to the TatABC complex, which probably triggers association of the separate TatA complex to form the active translocon.

Its subcellular location is the cell inner membrane. Its function is as follows. Part of the twin-arginine translocation (Tat) system that transports large folded proteins containing a characteristic twin-arginine motif in their signal peptide across membranes. Together with TatC, TatB is part of a receptor directly interacting with Tat signal peptides. TatB may form an oligomeric binding site that transiently accommodates folded Tat precursor proteins before their translocation. The protein is Sec-independent protein translocase protein TatB of Burkholderia ambifaria (strain ATCC BAA-244 / DSM 16087 / CCUG 44356 / LMG 19182 / AMMD) (Burkholderia cepacia (strain AMMD)).